Here is a 415-residue protein sequence, read N- to C-terminus: Lupus La protein homolog (415 aa).

One can recognise an HTH La-type RNA-binding domain in the interval 7–99 (NEKMAALEAK…RRSPSRPLPE (93 aa)). Phosphoserine occurs at positions 92 and 94. An RRM domain is found at 111–187 (RSVYIKGFPT…TNLLILFKED (77 aa)). At Lys116 the chain carries N6-acetyllysine. Position 120 is a phosphothreonine (Thr120). Lys128 and Lys327 each carry N6-acetyllysine. The 118-residue stretch at 226–343 (EGKMGCLLKF…HAARRFKGSH (118 aa)) folds into the xRRM domain. A disordered region spans residues 323-415 (ESLNKWKSKG…KKRENGARDK (93 aa)). The span at 328–341 (WKSKGGHAARRFKG) shows a compositional bias: basic residues. Lys356 carries the post-translational modification N6-acetyllysine. Residue Thr377 is modified to Phosphothreonine. The segment covering 377–415 (TRFDDDDHRRGPVKRGIDGRDREEPASKHKKRENGARDK) has biased composition (basic and acidic residues).

Interacts with DDX15. May interact with RUFY1. In terms of processing, phosphorylated.

The protein localises to the nucleus. In terms of biological role, binds to the 3' poly(U) terminus of nascent RNA polymerase III transcripts, protecting them from exonuclease digestion and facilitating their folding and maturation. The protein is Lupus La protein homolog (Ssb) of Rattus norvegicus (Rat).